Here is a 453-residue protein sequence, read N- to C-terminus: Homogentisate 1,2-dioxygenase (453 aa).

Histidine 306 acts as the Proton acceptor in catalysis. Fe cation-binding residues include histidine 349 and glutamate 355. Tyrosine 364 and histidine 385 together coordinate homogentisate. Histidine 385 contributes to the Fe cation binding site.

This sequence belongs to the homogentisate dioxygenase family. Hexamer; dimer of trimers. Requires Fe cation as cofactor.

The catalysed reaction is homogentisate + O2 = 4-maleylacetoacetate + H(+). It participates in amino-acid degradation; L-phenylalanine degradation; acetoacetate and fumarate from L-phenylalanine: step 4/6. Functionally, involved in the catabolism of homogentisate (2,5-dihydroxyphenylacetate or 2,5-OH-PhAc), a central intermediate in the degradation of phenylalanine and tyrosine. Catalyzes the oxidative ring cleavage of the aromatic ring of homogentisate to yield maleylacetoacetate. This chain is Homogentisate 1,2-dioxygenase, found in Rhizobium leguminosarum bv. trifolii (strain WSM2304).